Reading from the N-terminus, the 682-residue chain is DNA ligase (682 aa).

NAD(+)-binding positions include 38–42, 87–88, and glutamate 119; these read DAEYD and SI. Lysine 121 serves as the catalytic N6-AMP-lysine intermediate. 4 residues coordinate NAD(+): arginine 142, glutamate 181, lysine 298, and lysine 322. Zn(2+) is bound by residues cysteine 416, cysteine 419, cysteine 434, and cysteine 439. Residues 601–682 form the BRCT domain; that stretch reads GHEMPLAGKT…LLSLLEPGER (82 aa).

This sequence belongs to the NAD-dependent DNA ligase family. LigA subfamily. It depends on Mg(2+) as a cofactor. Mn(2+) is required as a cofactor.

It carries out the reaction NAD(+) + (deoxyribonucleotide)n-3'-hydroxyl + 5'-phospho-(deoxyribonucleotide)m = (deoxyribonucleotide)n+m + AMP + beta-nicotinamide D-nucleotide.. DNA ligase that catalyzes the formation of phosphodiester linkages between 5'-phosphoryl and 3'-hydroxyl groups in double-stranded DNA using NAD as a coenzyme and as the energy source for the reaction. It is essential for DNA replication and repair of damaged DNA. The sequence is that of DNA ligase from Desulfosudis oleivorans (strain DSM 6200 / JCM 39069 / Hxd3) (Desulfococcus oleovorans).